The sequence spans 290 residues: 4-hydroxy-tetrahydrodipicolinate synthase (290 aa).

Thr-44 is a binding site for pyruvate. The Proton donor/acceptor role is filled by Tyr-132. Lys-160 functions as the Schiff-base intermediate with substrate in the catalytic mechanism. Pyruvate is bound at residue Ile-202.

Belongs to the DapA family. Homotetramer; dimer of dimers.

It localises to the cytoplasm. The catalysed reaction is L-aspartate 4-semialdehyde + pyruvate = (2S,4S)-4-hydroxy-2,3,4,5-tetrahydrodipicolinate + H2O + H(+). It participates in amino-acid biosynthesis; L-lysine biosynthesis via DAP pathway; (S)-tetrahydrodipicolinate from L-aspartate: step 3/4. Its function is as follows. Catalyzes the condensation of (S)-aspartate-beta-semialdehyde [(S)-ASA] and pyruvate to 4-hydroxy-tetrahydrodipicolinate (HTPA). The chain is 4-hydroxy-tetrahydrodipicolinate synthase from Cereibacter sphaeroides (strain ATCC 17025 / ATH 2.4.3) (Rhodobacter sphaeroides).